The sequence spans 743 residues: Polyribonucleotide nucleotidyltransferase (743 aa).

Asp-489 and Asp-495 together coordinate Mg(2+). The 63-residue stretch at 556-618 (PRIEKMHIGK…PCIDAAIGMI (63 aa)) folds into the KH domain. The S1 motif domain occupies 628–698 (GETYPGKITS…KTGKFKLSRK (71 aa)). The interval 704-743 (PEGYVEPQPRERRERREGGREGGRNFERRGGDRDHREPRG) is disordered.

Belongs to the polyribonucleotide nucleotidyltransferase family. The cofactor is Mg(2+).

It is found in the cytoplasm. It catalyses the reaction RNA(n+1) + phosphate = RNA(n) + a ribonucleoside 5'-diphosphate. Its function is as follows. Involved in mRNA degradation. Catalyzes the phosphorolysis of single-stranded polyribonucleotides processively in the 3'- to 5'-direction. The sequence is that of Polyribonucleotide nucleotidyltransferase from Porphyromonas gingivalis (strain ATCC 33277 / DSM 20709 / CIP 103683 / JCM 12257 / NCTC 11834 / 2561).